The following is a 374-amino-acid chain: Nucleosome assembly protein 1;3 (374 aa).

A coiled-coil region spans residues 26–80; it reads VNALKNKLQNLAGQHSDVLENLTPKIRRRVEVLREIQGKHDEIETKFREERAALE. Position 41 is a phosphoserine (serine 41). A Nuclear export signal motif is present at residues 47-62; sequence LTPKIRRRVEVLREIQ. The short motif at 222–227 is the Nuclear localization signal element; sequence KKKPKK. The segment covering 299–339 has biased composition (acidic residues); that stretch reads IEGEEFEIDNDDEDDIDEDEDEDEEDEDEDEEEDDEDEEEE. Residues 299–374 are disordered; sequence IEGEEFEIDN…GERPPECKQQ (76 aa). Over residues 343–355 the composition is skewed to basic residues; that stretch reads TKKKPSVLHKKGG. The span at 364-374 shows a compositional bias: basic and acidic residues; that stretch reads QGERPPECKQQ. Cysteine 371 carries the post-translational modification Cysteine methyl ester. Cysteine 371 carries S-farnesyl cysteine lipidation. Positions 372–374 are cleaved as a propeptide — removed in mature form; it reads KQQ.

The protein belongs to the nucleosome assembly protein (NAP) family. Can form homomeric and heteromeric protein complexes with NAP1;1, NAP1;2 and NAP1;4. Binds histone H2A and associates with chromatin in vivo. In terms of tissue distribution, ubiquitous.

The protein localises to the nucleus. Its subcellular location is the cytoplasm. Functionally, may modulate chromatin structure by regulation of nucleosome assembly/disassembly. May function in nucleotide excision repair (NER). Involved in somatic homologous recombination. Could be involved in response to abscisic acid (ABA) and to salt stress. The sequence is that of Nucleosome assembly protein 1;3 (NAP1;3) from Arabidopsis thaliana (Mouse-ear cress).